The sequence spans 698 residues: Transferrin-binding protein B (698 aa).

Residues 1–20 (MNNPLVNQAAMVLPVFLLSA) form the signal peptide. The N-palmitoyl cysteine moiety is linked to residue Cys-21. Residue Cys-21 is the site of S-diacylglycerol cysteine attachment. Disordered stretches follow at residues 33–58 (VDTE…QKDQ), 83–102 (IKLS…KNPS), 294–324 (FSGK…SLSG), 349–383 (GSAK…SENS), 428–479 (ESGK…GDAN), and 669–698 (TKNA…KPVQ). The segment covering 46 to 56 (DVSSEKPQAQK) has biased composition (polar residues). Positions 299 to 315 (EATDKPKNDGETKEHPF) are enriched in basic and acidic residues. The span at 369-383 (AAASNGAAGTSSENS) shows a compositional bias: low complexity. Polar residues predominate over residues 460-476 (QAGTAENGNPAASNTAG). Over residues 671–686 (NATDASGNGNSASSAT) the composition is skewed to low complexity.

This sequence belongs to the TbpB family. In terms of assembly, binds only human holo-transferrin (TF), via the TF C-terminus. Forms a large complex with TbpA and TF. Interacts via its C-terminal domain with Slam1.

It is found in the cell outer membrane. Its subcellular location is the cell surface. Functionally, neisseria acquires iron by extracting it from serum transferrin (TF) in its human host. Acts as a TF receptor and is required for TF utilization. Involved in the initial capture of TF. Helps select only those TF molecules that can be used as an iron source and concentrates them on the cell surface, maintaining the iron-loaded status of the TF C-terminal lobe until its delivery to TbpA. In Neisseria meningitidis serogroup A / serotype 4A (strain DSM 15465 / Z2491), this protein is Transferrin-binding protein B.